The primary structure comprises 463 residues: ATP sulfurylase 1, chloroplastic (463 aa).

A chloroplast-targeting transit peptide spans 1–48 (MASMAAVLSKTPFLSQPLTKSSPNSDLPFAAVSFPSKSLRRRVGSIRA).

This sequence belongs to the sulfate adenylyltransferase family. Homotetramer.

The protein localises to the plastid. It is found in the chloroplast stroma. It catalyses the reaction sulfate + ATP + H(+) = adenosine 5'-phosphosulfate + diphosphate. It participates in sulfur metabolism; hydrogen sulfide biosynthesis; sulfite from sulfate: step 1/3. Mediates selenate (Se) reduction, and promotes Se and sulfur (S) uptake and assimilation. The polypeptide is ATP sulfurylase 1, chloroplastic (APS1) (Arabidopsis thaliana (Mouse-ear cress)).